We begin with the raw amino-acid sequence, 113 residues long: Colicin-E1* immunity protein (113 aa).

Its function is as follows. This protein is able to protect a cell, which harbors the plasmid pKY-1 encoding colicin E1*, against colicin E1*. In Shigella sonnei, this protein is Colicin-E1* immunity protein (imm).